Here is a 325-residue protein sequence, read N- to C-terminus: Glutarate 2-hydroxylase (325 aa).

Fe cation-binding residues include histidine 160, aspartate 162, and histidine 292.

The protein belongs to the glutarate hydroxylase family. Homotetramer. Requires Fe(2+) as cofactor.

It catalyses the reaction glutarate + 2-oxoglutarate + O2 = (S)-2-hydroxyglutarate + succinate + CO2. It participates in amino-acid degradation. In terms of biological role, acts as an alpha-ketoglutarate-dependent dioxygenase catalyzing hydroxylation of glutarate (GA) to L-2-hydroxyglutarate (L2HG). Functions in a L-lysine degradation pathway that proceeds via cadaverine, glutarate and L-2-hydroxyglutarate. The protein is Glutarate 2-hydroxylase of Escherichia coli (strain 55989 / EAEC).